A 233-amino-acid chain; its full sequence is Purine nucleoside phosphorylase DeoD-type (233 aa).

Residue His-4 coordinates a purine D-ribonucleoside. Residues Gly-20, Arg-24, Arg-43, and 87 to 90 contribute to the phosphate site; that span reads RIGT. A purine D-ribonucleoside is bound by residues 179 to 181 and 203 to 204; these read EME and SD. The active-site Proton donor is the Asp-204.

Belongs to the PNP/UDP phosphorylase family. As to quaternary structure, homohexamer; trimer of homodimers.

The catalysed reaction is a purine D-ribonucleoside + phosphate = a purine nucleobase + alpha-D-ribose 1-phosphate. The enzyme catalyses a purine 2'-deoxy-D-ribonucleoside + phosphate = a purine nucleobase + 2-deoxy-alpha-D-ribose 1-phosphate. Functionally, catalyzes the reversible phosphorolytic breakdown of the N-glycosidic bond in the beta-(deoxy)ribonucleoside molecules, with the formation of the corresponding free purine bases and pentose-1-phosphate. The polypeptide is Purine nucleoside phosphorylase DeoD-type (Helicobacter pylori (strain ATCC 700392 / 26695) (Campylobacter pylori)).